Reading from the N-terminus, the 198-residue chain is MAQGKVAIIIYSLYHHVYDLALAEKAGIEAAGGVADIYQVAETLSDDVLAKMHAPAKPDIPIATHETLTQYDAFLFGIPTRFGNFPAQIKAFWDRTGGLWAKNALRGKYAGVFVWTGTPGGGQETTIINSLSTLAHHGIIYVPFGYGYPGMTDLEEVHGGSPWGAGTFASGNGSRKVTDLEKAIAKQQGEDFFKTVFK.

In terms of domain architecture, Flavodoxin-like spans 6–192 (VAIIIYSLYH…AIAKQQGEDF (187 aa)). FMN-binding positions include 12-16 (SLYHH) and 112-164 (VFVW…SPWG).

The protein belongs to the WrbA family. Requires FMN as cofactor.

Its subcellular location is the cell membrane. The enzyme catalyses a quinone + NADH + H(+) = a quinol + NAD(+). It catalyses the reaction a quinone + NADPH + H(+) = a quinol + NADP(+). Functionally, flavodoxin-like protein (FLP) that plays a role in cell wall integrity, oxidative stress protection and virulence. FLPs act as NAD(P)H quinone oxidoreductases. Reduces ubiquinone (coenzyme Q), enabling it to serve as an antioxidant in the membrane. This Candida albicans (strain SC5314 / ATCC MYA-2876) (Yeast) protein is NAD(P)H quinone oxidoreductase PST1.